We begin with the raw amino-acid sequence, 644 residues long: Biosynthetic arginine decarboxylase (644 aa).

Lys-113 carries the N6-(pyridoxal phosphate)lysine modification. Position 293–303 (293–303) interacts with substrate; that stretch reads FDVGGGLGVDY.

Belongs to the Orn/Lys/Arg decarboxylase class-II family. SpeA subfamily. Mg(2+) is required as a cofactor. It depends on pyridoxal 5'-phosphate as a cofactor.

The catalysed reaction is L-arginine + H(+) = agmatine + CO2. Functionally, catalyzes the biosynthesis of agmatine from arginine. The chain is Biosynthetic arginine decarboxylase from Pasteurella multocida (strain Pm70).